Here is a 306-residue protein sequence, read N- to C-terminus: uncharacterized protein (306 aa).

Residues 287–306 (DEEGKSEDAKRQEEEKKKSS) are disordered.

The protein belongs to the aldo/keto reductase family.

Its subcellular location is the cytoplasm. It is found in the nucleus. This is an uncharacterized protein from Schizosaccharomyces pombe (strain 972 / ATCC 24843) (Fission yeast).